The following is a 643-amino-acid chain: 1-deoxy-D-xylulose-5-phosphate synthase (643 aa).

Thiamine diphosphate-binding positions include His72 and 113 to 115; that span reads GHA. Asp144 lines the Mg(2+) pocket. Residues 145–146, Asn174, Tyr287, and Glu370 each bind thiamine diphosphate; that span reads GA. Asn174 contributes to the Mg(2+) binding site.

Belongs to the transketolase family. DXPS subfamily. In terms of assembly, homodimer. The cofactor is Mg(2+). It depends on thiamine diphosphate as a cofactor.

The enzyme catalyses D-glyceraldehyde 3-phosphate + pyruvate + H(+) = 1-deoxy-D-xylulose 5-phosphate + CO2. It functions in the pathway metabolic intermediate biosynthesis; 1-deoxy-D-xylulose 5-phosphate biosynthesis; 1-deoxy-D-xylulose 5-phosphate from D-glyceraldehyde 3-phosphate and pyruvate: step 1/1. Catalyzes the acyloin condensation reaction between C atoms 2 and 3 of pyruvate and glyceraldehyde 3-phosphate to yield 1-deoxy-D-xylulose-5-phosphate (DXP). In Parasynechococcus marenigrum (strain WH8102), this protein is 1-deoxy-D-xylulose-5-phosphate synthase.